Here is a 266-residue protein sequence, read N- to C-terminus: tRNA (guanine-N(7)-)-methyltransferase (266 aa).

Residues 1 to 32 (MSDHGRMHIPESGLATPAAAHSDDPPHPHFNR) are disordered. S-adenosyl-L-methionine-binding residues include glutamate 96, glutamate 121, aspartate 148, and aspartate 171. Aspartate 171 is an active-site residue. Substrate contacts are provided by lysine 175 and aspartate 207.

Belongs to the class I-like SAM-binding methyltransferase superfamily. TrmB family.

The enzyme catalyses guanosine(46) in tRNA + S-adenosyl-L-methionine = N(7)-methylguanosine(46) in tRNA + S-adenosyl-L-homocysteine. It functions in the pathway tRNA modification; N(7)-methylguanine-tRNA biosynthesis. Catalyzes the formation of N(7)-methylguanine at position 46 (m7G46) in tRNA. This chain is tRNA (guanine-N(7)-)-methyltransferase, found in Mycolicibacterium vanbaalenii (strain DSM 7251 / JCM 13017 / BCRC 16820 / KCTC 9966 / NRRL B-24157 / PYR-1) (Mycobacterium vanbaalenii).